Reading from the N-terminus, the 458-residue chain is GTPase Der (458 aa).

2 consecutive EngA-type G domains span residues 4–169 (PSIA…PKDL) and 178–353 (IMMS…TQHR). GTP contacts are provided by residues 10–17 (GRPNVGKS), 57–61 (DTGGL), 120–123 (NKCE), 184–191 (GRPNVGKS), 231–235 (DTAGI), and 296–299 (NKWD). A KH-like domain is found at 354–439 (RRVTTSVVNE…PIILLWRGKQ (86 aa)).

Belongs to the TRAFAC class TrmE-Era-EngA-EngB-Septin-like GTPase superfamily. EngA (Der) GTPase family. As to quaternary structure, associates with the 50S ribosomal subunit.

Functionally, GTPase that plays an essential role in the late steps of ribosome biogenesis. The chain is GTPase Der from Prochlorococcus marinus subsp. pastoris (strain CCMP1986 / NIES-2087 / MED4).